Consider the following 104-residue polypeptide: Large ribosomal subunit protein bL21 (104 aa).

The protein belongs to the bacterial ribosomal protein bL21 family. Part of the 50S ribosomal subunit. Contacts protein L20.

Functionally, this protein binds to 23S rRNA in the presence of protein L20. This is Large ribosomal subunit protein bL21 from Lactococcus lactis subsp. lactis (strain IL1403) (Streptococcus lactis).